Reading from the N-terminus, the 94-residue chain is Large ribosomal subunit protein bL28 (94 aa).

This sequence belongs to the bacterial ribosomal protein bL28 family.

The protein is Large ribosomal subunit protein bL28 of Novosphingobium aromaticivorans (strain ATCC 700278 / DSM 12444 / CCUG 56034 / CIP 105152 / NBRC 16084 / F199).